We begin with the raw amino-acid sequence, 500 residues long: uncharacterized protein (500 aa).

The first 20 residues, 1 to 20 (MHSIIFKAAVALLGVSTAAG), serve as a signal peptide directing secretion. N-linked (GlcNAc...) asparagine glycosylation occurs at asparagine 43. Positions 60 to 232 (TALRPDCIIA…TAFTVKTHTQ (173 aa)) constitute an FAD-binding PCMH-type domain. Position 98 is a pros-8alpha-FAD histidine (histidine 98). N-linked (GlcNAc...) asparagine glycosylation is found at asparagine 194, asparagine 201, asparagine 246, asparagine 299, and asparagine 414.

It belongs to the oxygen-dependent FAD-linked oxidoreductase family. FAD serves as cofactor.

The protein localises to the secreted. This is an uncharacterized protein from Arthroderma benhamiae (strain ATCC MYA-4681 / CBS 112371) (Trichophyton mentagrophytes).